Here is a 2639-residue protein sequence, read N- to C-terminus: BAH and coiled-coil domain-containing protein 1 (2639 aa).

12 disordered regions span residues 23-49, 84-107, 188-249, 669-702, 716-746, 939-1047, 1104-1331, 1457-1513, 1582-1666, 1722-1776, 1868-1893, and 2057-2119; these read SAAAAARLAPAGPAAQPPAHFQPGKYF, SAASTHPSGPSSSPPEQAYRGSHP, APAH…GKER, FLSSKGPGQSERPDCARSREHDTTHGDGEVRQPP, VSRSEAAYGTNTARQGRAAPAFKGGGGPRST, QRAA…QSTA, SDVH…HSSG, QREL…KKVK, KVKS…LGTE, EVKI…RDAL, FDDNSSFSEEEEDEEEEEEDSGPLSA, and KKVS…DHFL. 2 stretches are compositionally biased toward low complexity: residues 24 to 41 and 84 to 98; these read AAAAARLAPAGPAAQPPA and SAASTHPSGPSSSPP. 2 stretches are compositionally biased toward basic and acidic residues: residues 211–247 and 679–698; these read GPKDFDRFLVGKELGREKAGKAAEGKERPAAEEDGGK and ERPDCARSREHDTTHGDGEV. Lys-222 carries the N6-acetyllysine modification. Residues 946 to 964 show a composition bias toward basic and acidic residues; the sequence is RKPEDQHLDLEEPAQEKAP. A compositionally biased stretch (low complexity) spans 972–988; that stretch reads ALTPTAPGAPSPAAGPT. Pro residues predominate over residues 989-1013; the sequence is KLPPCCHPPDPKPPASSPTPPPRPS. Polar residues predominate over residues 1106–1122; that stretch reads VHSSNLEDPETMQTTAP. Low complexity predominate over residues 1182-1198; the sequence is LEGLQELQCAALLEAGG. Over residues 1212 to 1221 the composition is skewed to basic and acidic residues; it reads AREERSREEG. The span at 1244–1275 shows a compositional bias: acidic residues; it reads LEDEGEQPAPEEDELEEDELGQQSMEDSEEDC. Residues 1307–1324 are compositionally biased toward pro residues; it reads DSPPDPQPPAASGPPSTV. A coiled-coil region spans residues 1439–1473; it reads EVGMRVRLAELQRRYKEKQRELARLQRKHDHERDE. The span at 1457–1475 shows a compositional bias: basic and acidic residues; that stretch reads QRELARLQRKHDHERDESS. Residues 1478–1492 are compositionally biased toward basic residues; sequence PARRGPGRPRKRKHS. Basic residues predominate over residues 1751–1761; the sequence is GKKKAKGKAKG. A compositionally biased stretch (acidic residues) spans 1868 to 1888; the sequence is FDDNSSFSEEEEDEEEEEEDS. Position 2274 is a phosphoserine (Ser-2274). Disordered regions lie at residues 2317–2336, 2348–2383, and 2432–2472; these read SDCHSSFSDEDEDGPGLAAG, SSSSSGSSTSSSSGSVSTSSLCSSDNEDSSYSSDDE, and GAGS…ENRP. The span at 2348 to 2371 shows a compositional bias: low complexity; sequence SSSSSGSSTSSSSGSVSTSSLCSS. The span at 2372–2383 shows a compositional bias: acidic residues; that stretch reads DNEDSSYSSDDE. A compositionally biased stretch (low complexity) spans 2432–2442; sequence GAGSGPSSSSK. The region spanning 2513–2633 is the BAH domain; that stretch reads ETLRVGDCAV…PTTGRLVTAD (121 aa).

The chain is BAH and coiled-coil domain-containing protein 1 from Homo sapiens (Human).